The sequence spans 495 residues: uncharacterized protein (495 aa).

The disordered stretch occupies residues Ser337–Lys360.

This is an uncharacterized protein from Caenorhabditis elegans.